The chain runs to 254 residues: MERLEEARKRLEEARRVAVLTGAGISKPSGIPTFRDAEGLWKNFNPLDYATPEAYARDPEKVWAWYAWRIQKVREAKPNPAHYALVELERRILSRGGSFLLVTQNVDGLHALAGSQNLVELHGNLLRARCEACGKRFPLPEAFAPPPFCPACGHRARPDVVWFGEFLPEGAWERAERAFAEADFALVVGTSAEVEPAASLGRIAFASGAYLVEVNPEPTPLTPLAHLSLRTGAVEGMALLLPPSPEDQAEGHLS.

The 250-residue stretch at 1–250 folds into the Deacetylase sirtuin-type domain; it reads MERLEEARKR…LPPSPEDQAE (250 aa). Position 22–41 (22–41) interacts with NAD(+); it reads GAGISKPSGIPTFRDAEGLW. Positions 66 and 69 each coordinate substrate. 104 to 107 is a binding site for NAD(+); sequence QNVD. H122 (proton acceptor) is an active-site residue. The Zn(2+) site is built by C130, C133, C149, and C152. NAD(+)-binding positions include 189-191, 215-217, and A233; these read GTS and NPE.

This sequence belongs to the sirtuin family. Class III subfamily. Requires Zn(2+) as cofactor.

It is found in the cytoplasm. It carries out the reaction N(6)-acetyl-L-lysyl-[protein] + NAD(+) + H2O = 2''-O-acetyl-ADP-D-ribose + nicotinamide + L-lysyl-[protein]. The enzyme catalyses N(6)-succinyl-L-lysyl-[protein] + NAD(+) + H2O = 2''-O-succinyl-ADP-D-ribose + nicotinamide + L-lysyl-[protein]. Functionally, NAD-dependent lysine deacetylase and desuccinylase that specifically removes acetyl and succinyl groups on target proteins. Modulates the activities of several proteins which are inactive in their acylated form. In Thermus thermophilus (strain ATCC 27634 / DSM 579 / HB8), this protein is NAD-dependent protein deacylase.